We begin with the raw amino-acid sequence, 423 residues long: UDP-N-acetylglucosamine 1-carboxyvinyltransferase 2 (423 aa).

23-24 (KN) is a phosphoenolpyruvate binding site. R93 contacts UDP-N-acetyl-alpha-D-glucosamine. The active-site Proton donor is the C117. C117 is subject to 2-(S-cysteinyl)pyruvic acid O-phosphothioketal. UDP-N-acetyl-alpha-D-glucosamine contacts are provided by residues 122–126 (RPIDQ), D305, and I327.

The protein belongs to the EPSP synthase family. MurA subfamily.

It localises to the cytoplasm. The catalysed reaction is phosphoenolpyruvate + UDP-N-acetyl-alpha-D-glucosamine = UDP-N-acetyl-3-O-(1-carboxyvinyl)-alpha-D-glucosamine + phosphate. It functions in the pathway cell wall biogenesis; peptidoglycan biosynthesis. Cell wall formation. Adds enolpyruvyl to UDP-N-acetylglucosamine. This Listeria innocua serovar 6a (strain ATCC BAA-680 / CLIP 11262) protein is UDP-N-acetylglucosamine 1-carboxyvinyltransferase 2.